Reading from the N-terminus, the 226-residue chain is UPF0758 protein SAK_1186 (226 aa).

Residues 103–225 (QILSSEQLAR…YYSFREEADI (123 aa)) enclose the MPN domain. Positions 174, 176, and 187 each coordinate Zn(2+). Residues 174–187 (HNHPSGSPKPSESD) carry the JAMM motif motif.

This sequence belongs to the UPF0758 family.

The chain is UPF0758 protein SAK_1186 from Streptococcus agalactiae serotype Ia (strain ATCC 27591 / A909 / CDC SS700).